The chain runs to 569 residues: Rab GTPase-binding effector protein 2 (569 aa).

Disordered stretches follow at residues 1-38, 181-267, and 388-414; these read MAAAAPVAADDDERRRRPGAALEDSRPQEGANGEAELG, QRRP…ASLV, and RAEQLPSSAPQGPQQEQGEEESLPSSV. N-acetylalanine is present on alanine 2. Positions 29-38 are enriched in low complexity; that stretch reads EGANGEAELG. Positions 34–184 form a coiled coil; that stretch reads EAELGELSRL…ELIQEIQRRP (151 aa). 4 positions are modified to phosphoserine: serine 189, serine 193, serine 200, and serine 204. The segment covering 245 to 257 has biased composition (low complexity); that stretch reads SSSSLPRSRQGLS. Residues 292–391 adopt a coiled-coil conformation; sequence WEQLQMEGRQ…EENQGLRAEQ (100 aa). A compositionally biased stretch (low complexity) spans 393 to 403; that stretch reads PSSAPQGPQQE. A coiled-coil region spans residues 423 to 523; that stretch reads RTRQEARAQL…LQAELETSEQ (101 aa).

It belongs to the rabaptin family. As to quaternary structure, heterodimer with RABGEF1. The dimer binds RAB5A that has been activated by GTP-binding. Interacts with SDCCAG8; this interaction is important for ciliogenesis regulation. Interacts with RAB4; this interaction may mediate VEGFR2 cell surface expression.

Its subcellular location is the cytoplasm. It is found in the early endosome. The protein localises to the cytoskeleton. It localises to the microtubule organizing center. The protein resides in the centrosome. Its subcellular location is the cilium basal body. In terms of biological role, plays a role in membrane trafficking and in homotypic early endosome fusion. Participates in arteriogenesis by regulating vascular endothelial growth factor receptor 2/VEGFR2 cell surface expression and endosomal trafficking. By interacting with SDCCAG8, localizes to centrosomes and plays a critical role in ciliogenesis. The protein is Rab GTPase-binding effector protein 2 (RABEP2) of Pongo abelii (Sumatran orangutan).